Consider the following 1256-residue polypeptide: Probable splicing factor 3B subunit 3 (1256 aa).

Residues 671–696 are disordered; it reads TKKSQSQTGQTTTTTTSTSSASSSVT. Residues 674–696 show a composition bias toward low complexity; that stretch reads SQSQTGQTTTTTTSTSSASSSVT.

Belongs to the RSE1 family. Identified in the spliceosome A complex; remains associated with the spliceosome throughout the splicing process. Component of the spliceosome B complex. Identified in the spliceosome C complex. Identified in the spliceosome E complex. Component of the U11/U12 snRNPs that are part of the U12-type spliceosome. Component of splicing factor SF3B complex which is composed of at least eight subunits. SF3B associates with the splicing factor SF3A and a 12S RNA unit to form the U2 small nuclear ribonucleoproteins complex (U2 snRNP).

It is found in the nucleus. Involved in pre-mRNA splicing as a component of the splicing factor SF3B complex, a constituent of the spliceosome. SF3B complex is required for 'A' complex assembly formed by the stable binding of U2 snRNP to the branchpoint sequence (BPS) in pre-mRNA. Sequence independent binding of SF3A/SF3B complex upstream of the branch site is essential, it may anchor U2 snRNP to the pre-mRNA. May also be involved in the assembly of the 'E' complex. Also belongs to the minor U12-dependent spliceosome, which is involved in the splicing of rare class of nuclear pre-mRNA intron. This Dictyostelium discoideum (Social amoeba) protein is Probable splicing factor 3B subunit 3 (sf3b3).